An 81-amino-acid chain; its full sequence is Photosystem I iron-sulfur center (81 aa).

4Fe-4S ferredoxin-type domains follow at residues 2–31 (SHSV…MIPW) and 39–68 (IAPA…VRVY). Residues Cys11, Cys14, Cys17, Cys21, Cys48, Cys51, Cys54, and Cys58 each contribute to the [4Fe-4S] cluster site.

In terms of assembly, the eukaryotic PSI reaction center is composed of at least 11 subunits. It depends on [4Fe-4S] cluster as a cofactor.

It localises to the plastid. The protein localises to the chloroplast thylakoid membrane. It catalyses the reaction reduced [plastocyanin] + hnu + oxidized [2Fe-2S]-[ferredoxin] = oxidized [plastocyanin] + reduced [2Fe-2S]-[ferredoxin]. Functionally, apoprotein for the two 4Fe-4S centers FA and FB of photosystem I (PSI); essential for photochemical activity. FB is the terminal electron acceptor of PSI, donating electrons to ferredoxin. The C-terminus interacts with PsaA/B/D and helps assemble the protein into the PSI complex. Required for binding of PsaD and PsaE to PSI. PSI is a plastocyanin-ferredoxin oxidoreductase, converting photonic excitation into a charge separation, which transfers an electron from the donor P700 chlorophyll pair to the spectroscopically characterized acceptors A0, A1, FX, FA and FB in turn. The polypeptide is Photosystem I iron-sulfur center (Chloranthus spicatus (Chulantree)).